Here is a 29-residue protein sequence, read N- to C-terminus: Photosystem I reaction center subunit XII (29 aa).

A helical membrane pass occupies residues 7–26 (IFVALILALFSFVLAIRLGT).

This sequence belongs to the PsaM family.

The protein resides in the plastid. It is found in the chloroplast thylakoid membrane. This is Photosystem I reaction center subunit XII from Guillardia theta (Cryptophyte).